A 114-amino-acid polypeptide reads, in one-letter code: UPF0342 protein OEOE_0901 (114 aa).

This sequence belongs to the UPF0342 family.

The protein is UPF0342 protein OEOE_0901 of Oenococcus oeni (strain ATCC BAA-331 / PSU-1).